A 136-amino-acid polypeptide reads, in one-letter code: Small ribosomal subunit protein eS6 (136 aa).

The protein belongs to the eukaryotic ribosomal protein eS6 family.

The polypeptide is Small ribosomal subunit protein eS6 (Methanosarcina acetivorans (strain ATCC 35395 / DSM 2834 / JCM 12185 / C2A)).